The following is a 532-amino-acid chain: Probable alpha-galactosidase A (532 aa).

The signal sequence occupies residues 1–21; sequence MDTTKSLLSTLIAIMIPLSLG. Residues Cys44 and Cys76 are joined by a disulfide bond. 3 N-linked (GlcNAc...) asparagine glycosylation sites follow: Asn47, Asn91, and Asn121. Cys124 and Cys154 are oxidised to a cystine. The active-site Nucleophile is Asp152. Asn201 is a glycosylation site (N-linked (GlcNAc...) asparagine). Residue Asp210 is the Proton donor of the active site. The region spanning 410–531 is the Ricin B-type lectin domain; sequence CSTVIPTGIV…GLPSGVDIKP (122 aa). Cystine bridges form between Cys427–Cys441 and Cys466–Cys478.

Belongs to the glycosyl hydrolase 27 family.

The protein resides in the secreted. It carries out the reaction Hydrolysis of terminal, non-reducing alpha-D-galactose residues in alpha-D-galactosides, including galactose oligosaccharides, galactomannans and galactolipids.. Functionally, hydrolyzes a variety of simple alpha-D-galactoside as well as more complex molecules such as oligosaccharides and polysaccharides. The polypeptide is Probable alpha-galactosidase A (aglA) (Aspergillus fumigatus (strain ATCC MYA-4609 / CBS 101355 / FGSC A1100 / Af293) (Neosartorya fumigata)).